A 148-amino-acid polypeptide reads, in one-letter code: Small ribosomal subunit protein uS9 (148 aa).

This sequence belongs to the universal ribosomal protein uS9 family.

This Aedes aegypti (Yellowfever mosquito) protein is Small ribosomal subunit protein uS9 (RpS16).